The chain runs to 571 residues: Cytoplasmic polyadenylation element-binding protein 2 (571 aa).

Disordered stretches follow at residues 1–23 (MSKSRRLFLSMQGDDDFWGNGDR) and 51–75 (FKQNKLGRQQSESRHENEENKVSQE). Basic and acidic residues predominate over residues 61–75 (SESRHENEENKVSQE). Residues 435-517 (LVAFIGGVPR…KRVEIKPYFF (83 aa)) form the RRM domain.

In terms of biological role, cytoplasmic polyadenylation element binding protein that binds to and regulates the translation of specific mRNAs. The chain is Cytoplasmic polyadenylation element-binding protein 2 (cpb-2) from Caenorhabditis remanei (Caenorhabditis vulgaris).